The following is a 135-amino-acid chain: NADH-quinone oxidoreductase subunit K (135 aa).

Transmembrane regions (helical) follow at residues 33–53, 63–83, and 95–115; these read VLGLIPMSHGLILAGILFAIG, FLFMLMSLEIMMNAAALAFVV, and IMFIFILTLAAAEAAIGLAIL.

Belongs to the complex I subunit 4L family. In terms of assembly, NDH-1 is composed of 14 different subunits. Subunits NuoA, H, J, K, L, M, N constitute the membrane sector of the complex.

It localises to the cell inner membrane. It catalyses the reaction a quinone + NADH + 5 H(+)(in) = a quinol + NAD(+) + 4 H(+)(out). Its function is as follows. NDH-1 shuttles electrons from NADH, via FMN and iron-sulfur (Fe-S) centers, to quinones in the respiratory chain. The immediate electron acceptor for the enzyme in this species is believed to be ubiquinone. Couples the redox reaction to proton translocation (for every two electrons transferred, four hydrogen ions are translocated across the cytoplasmic membrane), and thus conserves the redox energy in a proton gradient. This chain is NADH-quinone oxidoreductase subunit K, found in Psychrobacter arcticus (strain DSM 17307 / VKM B-2377 / 273-4).